The primary structure comprises 164 residues: NADH-quinone oxidoreductase subunit I (164 aa).

4Fe-4S ferredoxin-type domains are found at residues 55 to 85 and 95 to 124; these read LRRYPNGEERCIACKLCEAICPAQAITIDAE and TRYDIDMTKCIYCGFCQEACPVDAIVEGPN. Residues Cys65, Cys68, Cys71, Cys75, Cys104, Cys107, Cys110, and Cys114 each contribute to the [4Fe-4S] cluster site.

This sequence belongs to the complex I 23 kDa subunit family. As to quaternary structure, NDH-1 is composed of 14 different subunits. Subunits NuoA, H, J, K, L, M, N constitute the membrane sector of the complex. It depends on [4Fe-4S] cluster as a cofactor.

It is found in the cell inner membrane. The catalysed reaction is a quinone + NADH + 5 H(+)(in) = a quinol + NAD(+) + 4 H(+)(out). Its function is as follows. NDH-1 shuttles electrons from NADH, via FMN and iron-sulfur (Fe-S) centers, to quinones in the respiratory chain. The immediate electron acceptor for the enzyme in this species is believed to be ubiquinone. Couples the redox reaction to proton translocation (for every two electrons transferred, four hydrogen ions are translocated across the cytoplasmic membrane), and thus conserves the redox energy in a proton gradient. The chain is NADH-quinone oxidoreductase subunit I from Ruegeria pomeroyi (strain ATCC 700808 / DSM 15171 / DSS-3) (Silicibacter pomeroyi).